A 62-amino-acid chain; its full sequence is Histone H1.2, embryonic (62 aa).

Residues 1 to 53 (HVVAAITALKERGGSSMKKQSVFIKKALKSGVEKGTLVQVKGKGASGSFKLGK) enclose the H15 domain.

Belongs to the histone H1/H5 family.

It is found in the nucleus. It localises to the chromosome. Histones H1 are necessary for the condensation of nucleosome chains into higher-order structures. The sequence is that of Histone H1.2, embryonic from Parechinus angulosus (Angulate sea urchin).